A 514-amino-acid chain; its full sequence is Alanine--glyoxylate aminotransferase 2, mitochondrial (514 aa).

A mitochondrion-targeting transit peptide spans 1–41; the sequence is MTLIWRHLLRPLCLVTSAPRILEMHPFLSLGTSRTSVTKLS. Lys-71 carries the N6-acetyllysine; alternate modification. An N6-succinyllysine; alternate modification is found at Lys-71. Residue Lys-84 is modified to N6-acetyllysine. An N6-acetyllysine; alternate modification is found at Lys-262. Lys-262 carries the N6-succinyllysine; alternate modification. Position 304 is an N6-succinyllysine (Lys-304). Position 350 is an N6-(pyridoxal phosphate)lysine (Lys-350). 2 positions are modified to N6-acetyllysine; alternate: Lys-417 and Lys-420. An N6-succinyllysine; alternate mark is found at Lys-417 and Lys-420.

This sequence belongs to the class-III pyridoxal-phosphate-dependent aminotransferase family. In terms of assembly, homotetramer. Pyridoxal 5'-phosphate is required as a cofactor. As to expression, expressed in the convoluted tubule in the kidney and in the liver hepatocytes (at protein level).

Its subcellular location is the mitochondrion. It carries out the reaction glyoxylate + L-alanine = glycine + pyruvate. The enzyme catalyses (R)-3-amino-2-methylpropanoate + pyruvate = 2-methyl-3-oxopropanoate + L-alanine. The catalysed reaction is 3-oxopropanoate + L-alanine = beta-alanine + pyruvate. It catalyses the reaction 2-oxobutanoate + L-alanine = (2S)-2-aminobutanoate + pyruvate. It carries out the reaction N(omega),N(omega)-dimethyl-L-arginine + pyruvate = 5-(3,3-dimethylguanidino)-2-oxopentanoate + L-alanine. The enzyme catalyses N(omega),N('omega)-dimethyl-L-arginine + pyruvate = 5-(3,3'-dimethylguanidino)-2-oxopentanoate + L-alanine. The catalysed reaction is N(omega),N(omega)-dimethyl-L-arginine + glyoxylate = 5-(3,3-dimethylguanidino)-2-oxopentanoate + glycine. It catalyses the reaction N(omega),N('omega)-dimethyl-L-arginine + glyoxylate = 5-(3,3'-dimethylguanidino)-2-oxopentanoate + glycine. It carries out the reaction N(omega)-methyl-L-arginine + pyruvate = 5-(3-methylguanidino)-2-oxopentanoate + L-alanine. The enzyme catalyses N(omega)-methyl-L-arginine + glyoxylate = 5-(3-methylguanidino)-2-oxopentanoate + glycine. The catalysed reaction is L-ornithine + pyruvate = 5-amino-2-oxopentanoate + L-alanine. It catalyses the reaction L-ornithine + glyoxylate = 5-amino-2-oxopentanoate + glycine. It carries out the reaction (2S)-2-aminobutanoate + glyoxylate = 2-oxobutanoate + glycine. The enzyme catalyses N(omega),N(omega)-dimethyl-L-arginine + oxaloacetate = 5-(3,3-dimethylguanidino)-2-oxopentanoate + L-aspartate. The catalysed reaction is oxaloacetate + L-alanine = L-aspartate + pyruvate. It catalyses the reaction N(omega),N(omega)-dimethyl-L-arginine + 2-oxobutanoate = 5-(3,3-dimethylguanidino)-2-oxopentanoate + (2S)-2-aminobutanoate. It carries out the reaction 2-oxopentanoate + N(omega),N(omega)-dimethyl-L-arginine = 5-(3,3-dimethylguanidino)-2-oxopentanoate + L-2-aminopentanoate. The enzyme catalyses 2-oxohexanoate + N(omega),N(omega)-dimethyl-L-arginine = L-2-aminohexanoate + 5-(3,3-dimethylguanidino)-2-oxopentanoate. Its function is as follows. Multifunctional aminotransferase with a broad substrate specificity. Catalyzes the conversion of glyoxylate to glycine using alanine as the amino donor. Catalyzes metabolism of not L- but the D-isomer of D-beta-aminoisobutyric acid to generate 2-methyl-3-oxopropanoate and alanine. Catalyzes the transfer of the amino group from beta-alanine to pyruvate to yield L-alanine and 3-oxopropanoate. Can metabolize NG-monomethyl-L-arginine (NMMA), asymmetric NG,NG-dimethyl-L-arginine (ADMA) and symmetric NG,N'G-dimethyl-L-arginine (SDMA). ADMA is a potent inhibitor of nitric-oxide (NO) synthase, and this activity provides mechanism through which the kidney regulates blood pressure. In Homo sapiens (Human), this protein is Alanine--glyoxylate aminotransferase 2, mitochondrial (AGXT2).